Consider the following 267-residue polypeptide: Glutamate racemase (267 aa).

Substrate contacts are provided by residues 13–14 (DS) and 45–46 (YS). The Proton donor/acceptor role is filled by cysteine 77. 78–79 (NT) contacts substrate. Catalysis depends on cysteine 188, which acts as the Proton donor/acceptor. 189–190 (TH) serves as a coordination point for substrate.

Belongs to the aspartate/glutamate racemases family.

It carries out the reaction L-glutamate = D-glutamate. Its pathway is cell wall biogenesis; peptidoglycan biosynthesis. Provides the (R)-glutamate required for cell wall biosynthesis. The polypeptide is Glutamate racemase (Histophilus somni (strain 129Pt) (Haemophilus somnus)).